The following is a 1045-amino-acid chain: FERM, ARHGEF and pleckstrin domain-containing protein 1 (1045 aa).

A disordered region spans residues 1–37 (MGEIEQRPTPGSRLGAPENSGISTLERGQKPPPTPSG). Residues S20 and S23 each carry the phosphoserine modification. T24 carries the phosphothreonine modification. Residues 40-320 (VSIKIQMLDD…EHHAFFRLFE (281 aa)) enclose the FERM domain. Phosphoserine is present on residues S340, S373, S389, S403, S418, S427, and S433. Residues 392-534 (SASLTFGEGA…TDDEDEGRRK (143 aa)) are disordered. Polar residues-rich tracts occupy residues 471–489 (TGSL…NSQG) and 496–511 (VTLS…QASP). 2 positions are modified to phosphoserine: S510 and S514. Positions 540-730 (KAYFIAKEVS…TEMVAQLHGT (191 aa)) constitute a DH domain. A PH 1 domain is found at 759–856 (EFIRLGSLSK…WVEDIQMAID (98 aa)). Phosphoserine occurs at positions 833, 872, and 878. The tract at residues 866-902 (PEFLASSPPDNKSPDEATAADQESEDDLSASRTSLER) is disordered. Position 883 is a phosphothreonine (T883). Phosphoserine is present on residues S889, S896, and S899. In terms of domain architecture, PH 2 spans 932-1029 (ENQLSGNLLR…WMEVIRSATS (98 aa)).

In terms of assembly, interacts with CADM1. Interacts with RAC1.

The protein resides in the cell membrane. It is found in the synapse. It localises to the synaptosome. The protein localises to the cytoplasm. Its subcellular location is the cytosol. The protein resides in the cell projection. It is found in the filopodium. It localises to the dendrite. The protein localises to the dendritic spine. In terms of biological role, functions as a guanine nucleotide exchange factor for RAC1. May play a role in semaphorin signaling. Plays a role in the assembly and disassembly of dendritic filopodia, the formation of dendritic spines, regulation of dendrite length and ultimately the formation of synapses. The sequence is that of FERM, ARHGEF and pleckstrin domain-containing protein 1 (FARP1) from Pongo abelii (Sumatran orangutan).